Reading from the N-terminus, the 569-residue chain is MAELEAVADDLDALIDDLDYLPGHFHLEMQLNFEPRSPAPQRARDLKLQREGLRQELQLAAAPQRPAVRHLLGAFAFYLEELDEARECFLEVAHEHPGNLNAWANLAHVYGRLGQEEEEEACAARLADLMGLAEEPEAAGDPQLRAARCLAEQGYAHGFDVGCASPEERARGLAAGIALYDKALGYGQQIPMEEKRGWYFTMATLYIRLDGIFLELGSEEQKRLPAFNRTLALLRQVLKSEDPRHRALAWCYLGMLLERKDTFSTTPMGVHDCGYSGTDPLDCFGKAIEIAKNQPPILNRLAKIFYFLGKQDMAIGTCNMALDVLRDPELNWQAYCTRAKIHIRAYLHDLKRAKMGLGGMPDRNHLACAKADLEEVVRVCPGFKAYLDIGQVYYYMGVDAVQELLAVDEAALNQALVFLAKAGESELGATLPELQLLRGKCLRIKGEDANAAACFKRAVELDDAGSSHTDGFGCLLEALLAQWSQAQLSDGELGREVDAWLRRAQDKYPAARLRQELQRVWRGHTDEVLGLARALVAQGRPALVRLLFETMEREGEGASAPRDRRAVSF.

TPR repeat units follow at residues 66 to 99, 101 to 133, 203 to 237, 260 to 294, 295 to 328, 383 to 418, and 432 to 465; these read PAVRHLLGAFAFYLEELDEARECFLEVAHEHPGN, NAWANLAHVYGRLGQEEEEEACAARLADLMGLA, ATLYIRLDGIFLELGSEEQKRLPAFNRTLALLRQV, KDTFSTTPMGVHDCGYSGTDPLDCFGKAIEIAKNQ, PPILNRLAKIFYFLGKQDMAIGTCNMALDVLRDP, FKAYLDIGQVYYYMGVDAVQELLAVDEAALNQALVF, and PELQLLRGKCLRIKGEDANAAACFKRAVELDDAG.

The chain is Tetratricopeptide repeat protein 22 (TTC22) from Homo sapiens (Human).